The chain runs to 27 residues: Secretin (27 aa).

Val-27 is modified (valine amide).

The protein belongs to the glucagon family.

It localises to the secreted. Its function is as follows. Hormone involved in different processes, such as regulation of the pH of the duodenal content, food intake and water homeostasis. Exerts its biological effects by binding to secretin receptor (SCTR), a G-protein coupled receptor expressed in the basolateral domain of several cells. Acts as a key gastrointestinal hormone by regulating the pH of the duodenal content. Secreted by S cells of the duodenum in the crypts of Lieberkuehn and regulates the pH of the duodenum by (1) inhibiting the secretion of gastric acid from the parietal cells of the stomach and (2) stimulating the production of bicarbonate (NaHCO(3)) from the ductal cells of the pancreas. Production of bicarbonate is essential to neutralize the pH and ensure no damage is done to the small intestine by the gastric acid. In addition to regulating the pH of the duodenal content, plays a central role in diet induced thermogenesis: acts as a non-sympathetic brown fat (BAT) activator mediating prandial thermogenesis, which consequentially induces satiation. Mechanistically, secretin released by the gut after a meal binds to secretin receptor (SCTR) in brown adipocytes, activating brown fat thermogenesis by stimulating lipolysis, which is sensed in the brain and promotes satiation. Also able to stimulate lipolysis in white adipocytes. Also plays an important role in cellular osmoregulation: released into the systemic circulation in response to hyperosmolality and acts at different levels in the hypothalamus, pituitary and kidney to regulate water homeostasis. Also plays a role in the central nervous system, possibly by acting as a neuropeptide hormone: required for hippocampal synaptic function and neural progenitor cells maintenance. This chain is Secretin, found in Canis lupus familiaris (Dog).